We begin with the raw amino-acid sequence, 190 residues long: Elongation factor P-like protein (190 aa).

It belongs to the elongation factor P family.

This is Elongation factor P-like protein from Pectobacterium atrosepticum (strain SCRI 1043 / ATCC BAA-672) (Erwinia carotovora subsp. atroseptica).